The following is a 131-amino-acid chain: Agouti-signaling protein (131 aa).

Residues 1–22 form the signal peptide; sequence MDVTRLLLATLVGFLCFFTVHS. Asn-39 carries N-linked (GlcNAc...) asparagine glycosylation. A disordered region spans residues 58 to 100; the sequence is KSKKISRKEAEKRKRSSKKKASMKKVARPPPPSPCVATRDSCK. The segment covering 70-84 has biased composition (basic residues); that stretch reads RKRSSKKKASMKKVA. 5 disulfide bridges follow: Cys-92–Cys-107, Cys-99–Cys-113, Cys-106–Cys-124, Cys-110–Cys-131, and Cys-115–Cys-122. Residues 92-131 enclose the Agouti domain; the sequence is CVATRDSCKPPAPACCDPCASCQCRFFGSACTCRVLNPNC.

In terms of tissue distribution, epithelial cells of the hair follicles and the epidermis.

It localises to the secreted. Its function is as follows. Involved in the regulation of melanogenesis. The binding of ASP to MC1R precludes alpha-MSH initiated signaling and thus blocks production of cAMP, leading to a down-regulation of eumelanogenesis (brown/black pigment) and thus increasing synthesis of pheomelanin (yellow/red pigment). Causes hair follicle melanocytes to synthesize phaeomelanin instead of black or brown pigment eumelanin and produces hairs with a subapical yellow band on an otherwise black or brown background when expressed during the mid-portion of hair growth. This is Agouti-signaling protein (Asip) from Mus musculus (Mouse).